Consider the following 118-residue polypeptide: Small ribosomal subunit protein uS13 (118 aa).

Residues 96-118 (PLRGQRTRTNARTRKGPRKAIKK) are disordered.

Belongs to the universal ribosomal protein uS13 family. Part of the 30S ribosomal subunit. Forms a loose heterodimer with protein S19. Forms two bridges to the 50S subunit in the 70S ribosome.

Its function is as follows. Located at the top of the head of the 30S subunit, it contacts several helices of the 16S rRNA. In the 70S ribosome it contacts the 23S rRNA (bridge B1a) and protein L5 of the 50S subunit (bridge B1b), connecting the 2 subunits; these bridges are implicated in subunit movement. Contacts the tRNAs in the A and P-sites. This is Small ribosomal subunit protein uS13 from Stenotrophomonas maltophilia (strain K279a).